A 75-amino-acid polypeptide reads, in one-letter code: Small ribosomal subunit protein bS16 (75 aa).

Belongs to the bacterial ribosomal protein bS16 family.

The polypeptide is Small ribosomal subunit protein bS16 (Campylobacter hominis (strain ATCC BAA-381 / DSM 21671 / CCUG 45161 / LMG 19568 / NCTC 13146 / CH001A)).